Reading from the N-terminus, the 548-residue chain is Acetamidase (548 aa).

Active-site charge relay system residues include lysine 129 and serine 204. Serine 228 acts as the Acyl-ester intermediate in catalysis.

Belongs to the amidase family.

It carries out the reaction a monocarboxylic acid amide + H2O = a monocarboxylate + NH4(+). The catalysed reaction is acetamide + H2O = acetate + NH4(+). In terms of biological role, allows acetamide to be used as a sole carbon or nitrogen source. The chain is Acetamidase (amdS) from Emericella nidulans (strain FGSC A4 / ATCC 38163 / CBS 112.46 / NRRL 194 / M139) (Aspergillus nidulans).